A 261-amino-acid polypeptide reads, in one-letter code: 6-phosphogluconolactonase (261 aa).

The protein belongs to the glucosamine/galactosamine-6-phosphate isomerase family. 6-phosphogluconolactonase subfamily.

The catalysed reaction is 6-phospho-D-glucono-1,5-lactone + H2O = 6-phospho-D-gluconate + H(+). It participates in carbohydrate degradation; pentose phosphate pathway; D-ribulose 5-phosphate from D-glucose 6-phosphate (oxidative stage): step 2/3. Functionally, hydrolysis of 6-phosphogluconolactone to 6-phosphogluconate. This Streptomyces coelicolor (strain ATCC BAA-471 / A3(2) / M145) protein is 6-phosphogluconolactonase (pgl).